The chain runs to 79 residues: Endothelin-2 (79 aa).

Positions 1–23 (PEQTAPYGLGNPPRRRRRSLPRR) are disordered. The segment at 24–39 (CQCSSARDPSCATFCL) is endothelin-like. The disordered stretch occupies residues 51-79 (SRKSPADVFQTGKTGATRGELLQRLRDIS).

It belongs to the endothelin/sarafotoxin family.

The protein localises to the secreted. In terms of biological role, endothelins are endothelium-derived vasoconstrictor peptides. The protein is Endothelin-2 (EDN2) of Macaca fascicularis (Crab-eating macaque).